The primary structure comprises 467 residues: Gamma-aminobutyric acid receptor subunit rho-3 (467 aa).

Residues methionine 1–alanine 24 form the signal peptide. Residues serine 25–histidine 266 are Extracellular-facing. Residues arginine 111 and serine 175 each contribute to the 4-aminobutanoate site. A disulfide bond links cysteine 184 and cysteine 198. Glutamate 203 lines the 4-aminobutanoate pocket. A glycan (N-linked (GlcNAc...) asparagine) is linked at asparagine 220. The chain crosses the membrane as a helical span at residues valine 267 to valine 287. Topologically, residues serine 288–arginine 299 are cytoplasmic. A helical transmembrane segment spans residues valine 300–serine 320. The Extracellular portion of the chain corresponds to methionine 321–aspartate 331. Residues valine 332–asparagine 352 traverse the membrane as a helical segment. The segment at glutamate 347–arginine 448 is interaction with SQSTM1. The Cytoplasmic segment spans residues tyrosine 353 to tyrosine 446. A helical transmembrane segment spans residues serine 447–valine 467.

The protein belongs to the ligand-gated ion channel (TC 1.A.9) family. Gamma-aminobutyric acid receptor (TC 1.A.9.5) subfamily. GABRR3 sub-subfamily. As to quaternary structure, three rho subunits (rho-1/GBRR1, rho-2/GBRR2 and rho-3/GBRR3) coassemble either to form functional homopentamers or heteropentamers. Forms a ternary complex with SQSTM1 and PRKCZ.

Its subcellular location is the postsynaptic cell membrane. It localises to the cell membrane. The enzyme catalyses chloride(in) = chloride(out). With respect to regulation, inhibited by TPMPA, a rho-specific antagonist, when forming a homopentamer. Functionally, rho subunit of the pentameric ligand-gated chloride channels responsible for mediating the effects of gamma-aminobutyric acid (GABA), the major inhibitory neurotransmitter in the brain. Rho-containing GABA-gated chloride channels are a subclass of GABA(A) receptors (GABAARs) entirely composed of rho subunits, where GABA molecules bind at the rho intersubunit interfaces. When activated by GABA, rho-GABAARs selectively allow the flow of chloride anions across the cell membrane down their electrochemical gradient. This Homo sapiens (Human) protein is Gamma-aminobutyric acid receptor subunit rho-3.